A 791-amino-acid polypeptide reads, in one-letter code: MPPLLLLPAIYMLLFFRVSPTISLQEVHVNRETMGKIAVASKLMWCSAAVDILFLLDGSHSIGKGSFERSKRFAIAACDALDISPGRVRVGALQFGSTPHLEFPLDSFSTRQEVKESIKGIVFKGGRTETGLALKRLSRGFPGGRNGSVPQILIIVTDGKSQGPVALPAKQLRERGIVVFAVGVRFPRWDELLTLASEPKDRHVLLAEQVEDATNGLLSTLSSSALCTTADPDCRVEPHPCERRTLETVRELAGNALCWRGSRQADTVLALPCPFYSWKRVFQTHPANCYRTICPGPCDSQPCQNGGTCIPEGVDRYHCLCPLAFGGEVNCAPKLSLECRIDVLFLLDSSAGTTLGGFRRAKAFVKRFVQAVLREDSRARVGIASYGRNLMVAVPVGEYQHVPDLIRSLDSIPFSGGPTLTGSALLQVAEHGFGSASRTGQDRPRRVVVLLTESRSQDEVSGPAAHARARELLLLGVGSEILQAELVKITGSPKHVMVHTDPQDLFSQIPELQRRLCSQPRPGCQAQSLDLVFLLDASASVGRENFAQMQSFIRKCTLRFDVNPDVTQVGLVVYGSRVQTAFGLDTHPTRAAVLRAMSQAPYLGGVGSAGTALLHIEDKVMTVQRGARPGVPKAVVMLTGGSGAEDAAVPAQKLRGNGISVLVMSVGAVLREAVRRLAGPRDSLIHVAAYTDLPYHQDMLIEWLCREARLPVNLCKPSPCMNEGTCVLKNGSYRCECRGGWEGPHCENRILRGDAPMARSFHQEPAGLQGPTPSQQAPKHLRIGKALSSAK.

Residues 1–23 (MPPLLLLPAIYMLLFFRVSPTIS) form the signal peptide. One can recognise a VWFA 1 domain in the interval 51-221 (DILFLLDGSH…DATNGLLSTL (171 aa)). N-linked (GlcNAc...) asparagine glycosylation occurs at Asn146. The EGF-like 1 domain maps to 295 to 332 (PGPCDSQPCQNGGTCIPEGVDRYHCLCPLAFGGEVNCA). 3 cysteine pairs are disulfide-bonded: Cys298–Cys309, Cys303–Cys319, and Cys321–Cys331. VWFA domains lie at 342–516 (DVLF…QRRL) and 530–704 (DLVF…IEWL). The EGF-like 2 domain maps to 711–747 (PVNLCKPSPCMNEGTCVLKNGSYRCECRGGWEGPHCE). Cystine bridges form between Cys715-Cys726, Cys720-Cys735, and Cys737-Cys746. The interval 762–791 (HQEPAGLQGPTPSQQAPKHLRIGKALSSAK) is disordered.

As to quaternary structure, forms monomers and multimers. In terms of tissue distribution, detected in uterus, kidney, and skin. Also detected in intestine and lung of adult mice, and in calvaria, femur, brain, heart, intestine, skeletal muscle, and lung of newborn mice.

It is found in the secreted. This Mus musculus (Mouse) protein is von Willebrand factor A domain-containing protein 2 (Vwa2).